The following is a 409-amino-acid chain: NADH-quinone oxidoreductase subunit 4 (409 aa).

This sequence belongs to the complex I 49 kDa subunit family. NDH-1 is composed of 15 different subunits, Nqo1 to Nqo15. The complex has a L-shaped structure, with the hydrophobic arm (subunits Nqo7, Nqo8 and Nqo10 to Nqo14) embedded in the membrane and the hydrophilic peripheral arm (subunits Nqo1 to Nqo6, Nqo9 and Nqo15) protruding into the bacterial cytoplasm. The hydrophilic domain contains all the redox centers. This subunit interacts extensively with Nqo6.

Its subcellular location is the cell membrane. It carries out the reaction a quinone + NADH + 5 H(+)(in) = a quinol + NAD(+) + 4 H(+)(out). Its function is as follows. NDH-1 shuttles electrons from NADH, via FMN and iron-sulfur (Fe-S) centers, to quinones in the respiratory chain. The immediate electron acceptor for the enzyme in this species is menaquinone. Couples the redox reaction to proton translocation (for every two electrons transferred, four hydrogen ions are translocated across the cytoplasmic membrane), and thus conserves the redox energy in a proton gradient required for the synthesis of ATP. The Nqo4 subunit may contain the quinone-binding site. This chain is NADH-quinone oxidoreductase subunit 4 (nqo4), found in Thermus thermophilus (strain ATCC 27634 / DSM 579 / HB8).